Here is a 465-residue protein sequence, read N- to C-terminus: Hydroxyacid-oxoacid transhydrogenase, mitochondrial (465 aa).

It belongs to the iron-containing alcohol dehydrogenase family. Hydroxyacid-oxoacid transhydrogenase subfamily.

Its subcellular location is the mitochondrion. The catalysed reaction is (S)-3-hydroxybutanoate + 2-oxoglutarate = (R)-2-hydroxyglutarate + acetoacetate. It carries out the reaction 4-hydroxybutanoate + 2-oxoglutarate = (R)-2-hydroxyglutarate + succinate semialdehyde. Functionally, catalyzes the cofactor-independent reversible oxidation of gamma-hydroxybutyrate (GHB) to succinic semialdehyde (SSA) coupled to reduction of 2-ketoglutarate (2-KG) to D-2-hydroxyglutarate (D-2-HG). L-3-hydroxybutyrate (L-3-OHB) is also a substrate for HOT when using 2-KG as hydrogen acceptor, resulting in the formation of D-2-HG. This is Hydroxyacid-oxoacid transhydrogenase, mitochondrial from Caenorhabditis briggsae.